The sequence spans 1204 residues: Exportin-5 (1204 aa).

The interval methionine 1 to glutamate 108 is necessary for interaction with Ran. An N6-acetyllysine modification is found at lysine 396. Residues glutamate 533–leucine 640 are necessary for interaction with ILF3. Positions threonine 641–glutamine 642 are pre-siRNA binding.

This sequence belongs to the exportin family. In terms of assembly, component of a nuclear export receptor complex composed of XPO5, RAN, dsRNA-binding proteins and dsRNA. Found in a nuclear export complex with XPO5, RAN, EEF1A1, and aminoacylated tRNA. Found in a nuclear export complex with XPO5, RAN, ILF3 and dsRNA. Found in a nuclear export complex with XPO5, RAN and pre-miRNA. Found in a nuclear export complex with XPO5, RAN, ILF3 and minihelix VA1 dsRNA. Found in a nuclear export complex with XPO5, RAN, ILF3, ZNF346 and dsRNA. Interacts with EEF1A1, ILF3, NUP153, NUP214 and ZNF346. Interacts with RAN and cargo proteins in a GTP-dependent manner. Interacts with ADAR/ADAR1 (via DRBM domains). Interacts with SMAD4; mediates nuclear export of SMAD4. Interacts with RAN (GTP-bound form).

Its subcellular location is the nucleus. It is found in the cytoplasm. Mediates the nuclear export of proteins bearing a double-stranded RNA binding domain (dsRBD) and double-stranded RNAs (cargos). XPO5 in the nucleus binds cooperatively to the RNA and to the GTPase Ran in its active GTP-bound form. Proteins containing dsRBDs can associate with this trimeric complex through the RNA. Docking of this complex to the nuclear pore complex (NPC) is mediated through binding to nucleoporins. Upon transit of a nuclear export complex into the cytoplasm, hydrolysis of Ran-GTP to Ran-GDP (induced by RANBP1 and RANGAP1, respectively) cause disassembly of the complex and release of the cargo from the export receptor. XPO5 then returns to the nuclear compartment by diffusion through the nuclear pore complex, to mediate another round of transport. The directionality of nuclear export is thought to be conferred by an asymmetric distribution of the GTP- and GDP-bound forms of Ran between the cytoplasm and nucleus. Overexpression may in some circumstances enhance RNA-mediated gene silencing (RNAi). Mediates nuclear export of ADAR/ADAR1 in a RanGTP-dependent manner. Its function is as follows. Mediates the nuclear export of micro-RNA precursors, which form short hairpins. Also mediates the nuclear export of synthetic short hairpin RNAs used for RNA interference. In some circumstances can also mediate the nuclear export of deacylated and aminoacylated tRNAs. Specifically recognizes dsRNAs that lack a 5'-overhang in a sequence-independent manner, have only a short 3'-overhang, and that have a double-stranded length of at least 15 base-pairs. Binding is dependent on Ran-GTP. The chain is Exportin-5 (Xpo5) from Mus musculus (Mouse).